The chain runs to 264 residues: Thymidylate synthase (264 aa).

Arg-21 contacts dUMP. Residue His-51 participates in (6R)-5,10-methylene-5,6,7,8-tetrahydrofolate binding. 126–127 contacts dUMP; sequence RR. The active-site Nucleophile is the Cys-146. Residues 166 to 169, Asn-177, and 207 to 209 each bind dUMP; these read RSAD and HLY. Position 169 (Asp-169) interacts with (6R)-5,10-methylene-5,6,7,8-tetrahydrofolate. Ala-263 contacts (6R)-5,10-methylene-5,6,7,8-tetrahydrofolate.

Belongs to the thymidylate synthase family. Bacterial-type ThyA subfamily. As to quaternary structure, homodimer.

It is found in the cytoplasm. It carries out the reaction dUMP + (6R)-5,10-methylene-5,6,7,8-tetrahydrofolate = 7,8-dihydrofolate + dTMP. Its pathway is pyrimidine metabolism; dTTP biosynthesis. Functionally, catalyzes the reductive methylation of 2'-deoxyuridine-5'-monophosphate (dUMP) to 2'-deoxythymidine-5'-monophosphate (dTMP) while utilizing 5,10-methylenetetrahydrofolate (mTHF) as the methyl donor and reductant in the reaction, yielding dihydrofolate (DHF) as a by-product. This enzymatic reaction provides an intracellular de novo source of dTMP, an essential precursor for DNA biosynthesis. The sequence is that of Thymidylate synthase from Bartonella bacilliformis (strain ATCC 35685 / KC583 / Herrer 020/F12,63).